The sequence spans 504 residues: Anaerobic nitric oxide reductase transcription regulator NorR (504 aa).

Asp-57 is subject to 4-aspartylphosphate. Positions 187–416 constitute a Sigma-54 factor interaction domain; it reads MIGLSPGMTQ…LEHAIHRAVV (230 aa). ATP is bound by residues 215–222 and 278–287; these read GETGTGKE and ADNGTLFLDE. Positions 479–498 form a DNA-binding region, H-T-H motif; the sequence is WAACARMLETDVANLHRLAK.

Its pathway is nitrogen metabolism; nitric oxide reduction. Required for the expression of anaerobic nitric oxide (NO) reductase, acts as a transcriptional activator for at least the norVW operon. Activation also requires sigma-54. This Escherichia coli O9:H4 (strain HS) protein is Anaerobic nitric oxide reductase transcription regulator NorR.